We begin with the raw amino-acid sequence, 378 residues long: Carbamoyl phosphate synthase small chain (378 aa).

Residues 1–189 (MTKPAILALA…DSHPTIDAAD (189 aa)) are CPSase. L-glutamine contacts are provided by Ser47, Gly241, and Gly243. In terms of domain architecture, Glutamine amidotransferase type-1 spans 193–378 (HVVAFDYGVK…RFTDAMAKRR (186 aa)). Catalysis depends on Cys269, which acts as the Nucleophile. Leu270, Gln273, Asn311, Gly313, and Phe314 together coordinate L-glutamine. Active-site residues include His353 and Glu355.

Belongs to the CarA family. In terms of assembly, composed of two chains; the small (or glutamine) chain promotes the hydrolysis of glutamine to ammonia, which is used by the large (or ammonia) chain to synthesize carbamoyl phosphate. Tetramer of heterodimers (alpha,beta)4.

The enzyme catalyses hydrogencarbonate + L-glutamine + 2 ATP + H2O = carbamoyl phosphate + L-glutamate + 2 ADP + phosphate + 2 H(+). It catalyses the reaction L-glutamine + H2O = L-glutamate + NH4(+). It participates in amino-acid biosynthesis; L-arginine biosynthesis; carbamoyl phosphate from bicarbonate: step 1/1. It functions in the pathway pyrimidine metabolism; UMP biosynthesis via de novo pathway; (S)-dihydroorotate from bicarbonate: step 1/3. Small subunit of the glutamine-dependent carbamoyl phosphate synthetase (CPSase). CPSase catalyzes the formation of carbamoyl phosphate from the ammonia moiety of glutamine, carbonate, and phosphate donated by ATP, constituting the first step of 2 biosynthetic pathways, one leading to arginine and/or urea and the other to pyrimidine nucleotides. The small subunit (glutamine amidotransferase) binds and cleaves glutamine to supply the large subunit with the substrate ammonia. The chain is Carbamoyl phosphate synthase small chain from Pseudomonas putida (strain ATCC 47054 / DSM 6125 / CFBP 8728 / NCIMB 11950 / KT2440).